We begin with the raw amino-acid sequence, 352 residues long: Peptide chain release factor 1 (352 aa).

At Q229 the chain carries N5-methylglutamine.

It belongs to the prokaryotic/mitochondrial release factor family. In terms of processing, methylated by PrmC. Methylation increases the termination efficiency of RF1.

The protein localises to the cytoplasm. In terms of biological role, peptide chain release factor 1 directs the termination of translation in response to the peptide chain termination codons UAG and UAA. The protein is Peptide chain release factor 1 of Gluconacetobacter diazotrophicus (strain ATCC 49037 / DSM 5601 / CCUG 37298 / CIP 103539 / LMG 7603 / PAl5).